The chain runs to 205 residues: UPF0301 protein Bind_0718 (205 aa).

It belongs to the UPF0301 (AlgH) family.

This is UPF0301 protein Bind_0718 from Beijerinckia indica subsp. indica (strain ATCC 9039 / DSM 1715 / NCIMB 8712).